A 334-amino-acid chain; its full sequence is Ornithine carbamoyltransferase (334 aa).

Residues 57-60, Q84, R108, and 135-138 each bind carbamoyl phosphate; these read STRT and HPTQ. Residues N169, D233, and 237–238 contribute to the L-ornithine site; that span reads SM. Carbamoyl phosphate is bound by residues 275–276 and R320; that span reads CL.

Belongs to the aspartate/ornithine carbamoyltransferase superfamily. OTCase family.

It localises to the cytoplasm. The catalysed reaction is carbamoyl phosphate + L-ornithine = L-citrulline + phosphate + H(+). Its pathway is amino-acid biosynthesis; L-arginine biosynthesis; L-arginine from L-ornithine and carbamoyl phosphate: step 1/3. Its function is as follows. Reversibly catalyzes the transfer of the carbamoyl group from carbamoyl phosphate (CP) to the N(epsilon) atom of ornithine (ORN) to produce L-citrulline. In Aeromonas salmonicida (strain A449), this protein is Ornithine carbamoyltransferase.